Reading from the N-terminus, the 606-residue chain is Arginine--tRNA ligase (606 aa).

Residues 126–136 (PNTNKPLHLGH) carry the 'HIGH' region motif.

The protein belongs to the class-I aminoacyl-tRNA synthetase family. As to quaternary structure, monomer.

Its subcellular location is the cytoplasm. It catalyses the reaction tRNA(Arg) + L-arginine + ATP = L-arginyl-tRNA(Arg) + AMP + diphosphate. The polypeptide is Arginine--tRNA ligase (Phocaeicola vulgatus (strain ATCC 8482 / DSM 1447 / JCM 5826 / CCUG 4940 / NBRC 14291 / NCTC 11154) (Bacteroides vulgatus)).